Reading from the N-terminus, the 682-residue chain is Methionine--tRNA ligase (682 aa).

Residues 14–24 (PYANGSIHLGH) carry the 'HIGH' region motif. Zn(2+) contacts are provided by Cys-145, Cys-148, Cys-158, and Cys-161. A 'KMSKS' region motif is present at residues 331–335 (KMSKS). Lys-334 serves as a coordination point for ATP. The tRNA-binding domain occupies 580–682 (AFAAVDLRVA…SGAKPGQRIK (103 aa)).

This sequence belongs to the class-I aminoacyl-tRNA synthetase family. MetG type 1 subfamily. As to quaternary structure, homodimer. Zn(2+) is required as a cofactor.

The protein localises to the cytoplasm. It carries out the reaction tRNA(Met) + L-methionine + ATP = L-methionyl-tRNA(Met) + AMP + diphosphate. Functionally, is required not only for elongation of protein synthesis but also for the initiation of all mRNA translation through initiator tRNA(fMet) aminoacylation. This chain is Methionine--tRNA ligase, found in Pseudomonas savastanoi pv. phaseolicola (strain 1448A / Race 6) (Pseudomonas syringae pv. phaseolicola (strain 1448A / Race 6)).